A 228-amino-acid polypeptide reads, in one-letter code: Ras-related protein Rab-32D (228 aa).

16-23 contributes to the GTP binding site; sequence GDVNVGKT. Residues 38 to 46 carry the Effector region motif; sequence YKSTIGADF. GTP contacts are provided by residues 64 to 68 and 128 to 131; these read DTAGQ and NKSD. The segment at 183 to 228 is disordered; that stretch reads SDNEQFNDSPDEETSSITLLGTSKKHDNTNPNKPSTSSPSSCFNCK. Residues 185 to 196 show a composition bias toward acidic residues; that stretch reads NEQFNDSPDEET. Low complexity predominate over residues 211–228; the sequence is TNPNKPSTSSPSSCFNCK. The S-geranylgeranyl cysteine moiety is linked to residue cysteine 224.

It belongs to the small GTPase superfamily. Rab family.

In Dictyostelium discoideum (Social amoeba), this protein is Ras-related protein Rab-32D (rab32D).